A 212-amino-acid polypeptide reads, in one-letter code: 3-isopropylmalate dehydratase small subunit 2 (212 aa).

It belongs to the LeuD family. LeuD type 1 subfamily. In terms of assembly, heterodimer of LeuC and LeuD.

The enzyme catalyses (2R,3S)-3-isopropylmalate = (2S)-2-isopropylmalate. It functions in the pathway amino-acid biosynthesis; L-leucine biosynthesis; L-leucine from 3-methyl-2-oxobutanoate: step 2/4. Catalyzes the isomerization between 2-isopropylmalate and 3-isopropylmalate, via the formation of 2-isopropylmaleate. The polypeptide is 3-isopropylmalate dehydratase small subunit 2 (Chromobacterium violaceum (strain ATCC 12472 / DSM 30191 / JCM 1249 / CCUG 213 / NBRC 12614 / NCIMB 9131 / NCTC 9757 / MK)).